The primary structure comprises 48 residues: SPbeta prophage-derived uncharacterized protein YotE (48 aa).

This Bacillus subtilis (strain 168) protein is SPbeta prophage-derived uncharacterized protein YotE (yotE).